The chain runs to 382 residues: Biotin synthase (382 aa).

The region spanning 83 to 318 (CCGNVVDLCS…EQILRYAGGR (236 aa)) is the Radical SAM core domain. Residues Cys-101, Cys-105, and Cys-108 each coordinate [4Fe-4S] cluster. Residues Cys-146, Cys-183, Cys-243, and Arg-313 each coordinate [2Fe-2S] cluster.

It belongs to the radical SAM superfamily. Biotin synthase family. Homodimer. The cofactor is [4Fe-4S] cluster. [2Fe-2S] cluster is required as a cofactor.

It catalyses the reaction (4R,5S)-dethiobiotin + (sulfur carrier)-SH + 2 reduced [2Fe-2S]-[ferredoxin] + 2 S-adenosyl-L-methionine = (sulfur carrier)-H + biotin + 2 5'-deoxyadenosine + 2 L-methionine + 2 oxidized [2Fe-2S]-[ferredoxin]. It participates in cofactor biosynthesis; biotin biosynthesis; biotin from 7,8-diaminononanoate: step 2/2. In terms of biological role, catalyzes the conversion of dethiobiotin (DTB) to biotin by the insertion of a sulfur atom into dethiobiotin via a radical-based mechanism. The polypeptide is Biotin synthase (Crocosphaera subtropica (strain ATCC 51142 / BH68) (Cyanothece sp. (strain ATCC 51142))).